A 158-amino-acid polypeptide reads, in one-letter code: MHEGVQVSSKLEQLQALLAPVVEGLGYQCWGIEYVSQGKHSVLRIYIDKEGGILVDDCEAVSRQASAILDVEDPISSEYTLEVSSPGMDRPLFTLEQFASHAGEQVKIKLRSPFEGRRNFQGLLRGVEEQDVVVQVDNQEFLLPIDSIDKANIIPSFD.

It belongs to the RimP family.

The protein resides in the cytoplasm. Functionally, required for maturation of 30S ribosomal subunits. The protein is Ribosome maturation factor RimP of Pseudomonas putida (strain ATCC 47054 / DSM 6125 / CFBP 8728 / NCIMB 11950 / KT2440).